We begin with the raw amino-acid sequence, 490 residues long: Histone-lysine N-methyltransferase, H3 lysine-9 specific (490 aa).

The 62-residue stretch at 8-69 (YEVERIVDEK…RKRRLKGSNS (62 aa)) folds into the Chromo domain. Disordered stretches follow at residues 61–133 (KRRL…TALT) and 150–190 (KKLG…KPRN). Residues 102–114 (FSRELNVKKENKK) are compositionally biased toward basic and acidic residues. The segment covering 115-133 (VFSSQTTKRQSRKQSTALT) has biased composition (polar residues). Position 127 is an N6,N6,N6-trimethyllysine; alternate (Lys127). Lys127 carries the post-translational modification N6-methyllysine; alternate. The span at 155-168 (TRNEVKEESQKREL) shows a compositional bias: basic and acidic residues. Residues 169 to 185 (VSNSIKEATSPKTSSIL) are compositionally biased toward polar residues. Residues 258–325 (SGCNCSSLGG…ECPNRVVQRG (68 aa)) enclose the Pre-SET domain. Positions 260, 262, 268, 276, 278, 307, 311, 313, and 317 each coordinate Zn(2+). The 125-residue stretch at 328-452 (LPLEIFKTKE…PLEELTFDYA (125 aa)) folds into the SET domain. Residues 338–340 (KGW), Tyr381, Arg406, and 407–410 (FFNH) each bind S-adenosyl-L-methionine. Cys412 is a Zn(2+) binding site. The autoregulatory loop stretch occupies residues 453–472 (GAKDFSPVQSQKSQQNRISK). At Lys455 the chain carries N6,N6,N6-trimethyllysine; by autocatalysis; alternate. Lys455 is modified (N6,N6-dimethyllysine; by autocatalysis; alternate). Lys455 is modified (N6-methyllysine; by autocatalysis; alternate). Lys464 carries the N6-methyllysine modification. Residues 473–489 (LRRQCKCGSANCRGWLF) enclose the Post-SET domain. Residues Cys477, Cys479, and Cys484 each contribute to the Zn(2+) site. 477 to 478 (CK) contacts S-adenosyl-L-methionine.

Belongs to the class V-like SAM-binding methyltransferase superfamily. Histone-lysine methyltransferase family. Suvar3-9 subfamily. In terms of assembly, component of the Clr4 methyltransferase complex (ClrC) composed of at least clr4, rik1, pcu4, rbx1, raf1 and raf2. The cullin pcu4, rik1, raf1, raf2 and the ring-box protein rbx1 are components of an E3 ubiquitin ligase, whose activity is essential for heterochromatin assembly. Interacts directly with pcu4. Interacts with mlo3. Post-translationally, autocatalytic methylation of specific lysine residues in an internal loop (autoregulatory loop) promote a conformational switch that enhances the H3K9me activity of clr4.

It localises to the nucleus. The protein resides in the cytoplasm. It is found in the cytoskeleton. Its subcellular location is the microtubule organizing center. The protein localises to the spindle pole body. It localises to the chromosome. The enzyme catalyses L-lysyl(9)-[histone H3] + 3 S-adenosyl-L-methionine = N(6),N(6),N(6)-trimethyl-L-lysyl(9)-[histone H3] + 3 S-adenosyl-L-homocysteine + 3 H(+). It carries out the reaction N(6)-methyl-L-lysyl(9)-[histone H3] + S-adenosyl-L-methionine = N(6),N(6)-dimethyl-L-lysyl(9)-[histone H3] + S-adenosyl-L-homocysteine + H(+). It catalyses the reaction N(6),N(6)-dimethyl-L-lysyl(9)-[histone H3] + S-adenosyl-L-methionine = N(6),N(6),N(6)-trimethyl-L-lysyl(9)-[histone H3] + S-adenosyl-L-homocysteine + H(+). The catalysed reaction is L-lysyl-[protein] + S-adenosyl-L-methionine = N(6)-methyl-L-lysyl-[protein] + S-adenosyl-L-homocysteine + H(+). The enzyme catalyses N(6)-methyl-L-lysyl-[protein] + S-adenosyl-L-methionine = N(6),N(6)-dimethyl-L-lysyl-[protein] + S-adenosyl-L-homocysteine + H(+). It carries out the reaction N(6),N(6)-dimethyl-L-lysyl-[protein] + S-adenosyl-L-methionine = N(6),N(6),N(6)-trimethyl-L-lysyl-[protein] + S-adenosyl-L-homocysteine + H(+). It catalyses the reaction L-lysyl(9)-[histone H3] + S-adenosyl-L-methionine = N(6)-methyl-L-lysyl(9)-[histone H3] + S-adenosyl-L-homocysteine + H(+). With respect to regulation, an internal loop (autoregulatory loop) inhibits the catalytic activity of the enzyme by blocking the histone H3K9 substrate-binding pocket. Autocatalytic methylation of specific lysine residues in this loop promote a conformational switch that enhances the H3K9me activity of clr4. Functionally, histone methyltransferase which contributes to the establishment of heterochromatin by specifically methylating histone H3 to form H3K9me. Part of the Clr4 methyltransferase complex (ClrC). ClrC preferentially ubiquitylates H3K14 and ClrC-mediated H3 ubiquitination promotes clr4 methyltransferase activity. Clr4 functions as a reader and writer of H3K9 methylation. It sets the H3K9me mark and afterwards this H3K9me mark is recognized by the chromodomains of clr4 and swi6/HP1, which then recruit additional clr4 leading to the methylation of neighboring nucleosomes. H3K9me represents a specific tag for epigenetic transcriptional repression by recruiting swi6/HP1 to methylated histones which leads to transcriptional silencing within centromeric heterochromatin, telomeres, ribosomal DNA repeats, and the silent mating-type region. Clr4 methyltransferase activity promotes the assembly of a tripartite complex composed of ClrC and complexes involved in siRNA generation. Apart from H3K9, also methylates non-histone proteins such as mlo3. Interacts with mlo3 to promote the processing of centromeric and antisense RNAs. This Schizosaccharomyces pombe (strain 972 / ATCC 24843) (Fission yeast) protein is Histone-lysine N-methyltransferase, H3 lysine-9 specific (clr4).